The sequence spans 29 residues: Kunitz-type trypsin inhibitor IVTI (29 aa).

Belongs to the protease inhibitor I3 (leguminous Kunitz-type inhibitor) family. In terms of assembly, monomer and dimer.

Inhibits bovine trypsin but not chymotrypsin. Also inhibits trypsin-like enzymes from midgut of several lepidopteran species and inhibits larval development in those species. Has fungicidal activity against yeast C.buinensis. Has a bacteriostatic effect against E.coli. Is not cytotoxic. This Inga vera (River koko) protein is Kunitz-type trypsin inhibitor IVTI.